The primary structure comprises 140 residues: Nucleoside diphosphate kinase (140 aa).

ATP-binding residues include lysine 10, phenylalanine 58, arginine 86, threonine 92, arginine 103, and asparagine 113. Catalysis depends on histidine 116, which acts as the Pros-phosphohistidine intermediate.

Belongs to the NDK family. Homohexamer. Mg(2+) is required as a cofactor.

The protein resides in the cytoplasm. The enzyme catalyses a 2'-deoxyribonucleoside 5'-diphosphate + ATP = a 2'-deoxyribonucleoside 5'-triphosphate + ADP. It catalyses the reaction a ribonucleoside 5'-diphosphate + ATP = a ribonucleoside 5'-triphosphate + ADP. Its function is as follows. Major role in the synthesis of nucleoside triphosphates other than ATP. The ATP gamma phosphate is transferred to the NDP beta phosphate via a ping-pong mechanism, using a phosphorylated active-site intermediate. This is Nucleoside diphosphate kinase from Methanocaldococcus jannaschii (strain ATCC 43067 / DSM 2661 / JAL-1 / JCM 10045 / NBRC 100440) (Methanococcus jannaschii).